Reading from the N-terminus, the 187-residue chain is uncharacterized protein (187 aa).

The Tyr recombinase domain maps to 53–187 (RKPHIYSPAD…CLQTSYVVPG (135 aa)). Active-site residues include Arg-98 and Lys-123.

It belongs to the 'phage' integrase family.

This is an uncharacterized protein from Sinorhizobium fredii (strain NBRC 101917 / NGR234).